The sequence spans 124 residues: Small ribosomal subunit protein eS25 (124 aa).

Over residues 1–22 (PPKDDKKKKDAGKSAKKDKDPV) the composition is skewed to basic and acidic residues. The disordered stretch occupies residues 1–37 (PPKDDKKKKDAGKSAKKDKDPVNKSGGKAKKKKWSKG). The span at 27–37 (GKAKKKKWSKG) shows a compositional bias: basic residues. Lysine 42 carries the post-translational modification N6-acetyllysine. Position 51 is an N6-acetyllysine; alternate (lysine 51). Lysine 51 bears the N6-succinyllysine; alternate mark. An N6-acetyllysine mark is found at lysine 59 and lysine 65. An N6-acetyllysine; alternate modification is found at lysine 93. Lysine 93 is modified (N6-succinyllysine; alternate).

The protein belongs to the eukaryotic ribosomal protein eS25 family. Component of the small ribosomal subunit.

It localises to the cytoplasm. Its function is as follows. Component of the small ribosomal subunit. The ribosome is a large ribonucleoprotein complex responsible for the synthesis of proteins in the cell. The protein is Small ribosomal subunit protein eS25 (RPS25) of Oryctolagus cuniculus (Rabbit).